The chain runs to 194 residues: High mobility group protein B4 (194 aa).

2 consecutive DNA-binding regions (HMG box) follow at residues 9–79 and 93–161; these read PKAN…MNYF and PRRP…SVYR.

This sequence belongs to the HMGB family.

Its subcellular location is the nucleus. The protein localises to the chromosome. This chain is High mobility group protein B4 (HMGB4), found in Bos taurus (Bovine).